We begin with the raw amino-acid sequence, 153 residues long: 3-hydroxyacyl-[acyl-carrier-protein] dehydratase FabZ (153 aa).

The active site involves His53.

Belongs to the thioester dehydratase family. FabZ subfamily.

It localises to the cytoplasm. The enzyme catalyses a (3R)-hydroxyacyl-[ACP] = a (2E)-enoyl-[ACP] + H2O. Functionally, involved in unsaturated fatty acids biosynthesis. Catalyzes the dehydration of short chain beta-hydroxyacyl-ACPs and long chain saturated and unsaturated beta-hydroxyacyl-ACPs. This Lawsonia intracellularis (strain PHE/MN1-00) protein is 3-hydroxyacyl-[acyl-carrier-protein] dehydratase FabZ.